The following is a 784-amino-acid chain: LPS-assembly protein LptD (784 aa).

An N-terminal signal peptide occupies residues 1-24; sequence MKKRIPTLLATMIASALYSHQGLA. Disulfide bonds link C31–C724 and C173–C725.

This sequence belongs to the LptD family. In terms of assembly, component of the lipopolysaccharide transport and assembly complex. Interacts with LptE and LptA. Contains two intramolecular disulfide bonds.

The protein localises to the cell outer membrane. Together with LptE, is involved in the assembly of lipopolysaccharide (LPS) at the surface of the outer membrane. The polypeptide is LPS-assembly protein LptD (Salmonella typhi).